The chain runs to 107 residues: Putative double-stranded DNA mimic protein ECA2319 (107 aa).

It belongs to the putative dsDNA mimic protein family.

May act as a double-stranded DNA (dsDNA) mimic. Probably regulates the activity of a dsDNA-binding protein. This Pectobacterium atrosepticum (strain SCRI 1043 / ATCC BAA-672) (Erwinia carotovora subsp. atroseptica) protein is Putative double-stranded DNA mimic protein ECA2319.